We begin with the raw amino-acid sequence, 955 residues long: Eukaryotic translation initiation factor 3 subunit C (955 aa).

Disordered stretches follow at residues 1 to 22 (MSRFFAGGSDSDSDSSSDSEPV) and 157 to 299 (RAAP…EEGW). Positions 162 to 183 (DFAEEEEDDEREDEKGSDEEEE) are enriched in acidic residues. The span at 206 to 218 (VKPVADSDSSDWG) shows a compositional bias: low complexity. Residues 219–229 (SDSDSDSTSSD) show a composition bias toward acidic residues. A compositionally biased stretch (basic and acidic residues) spans 230 to 250 (EDAKYTSIRDRFLKKPEKGTE). A compositionally biased stretch (acidic residues) spans 288–297 (MFDENEEEEE). Residues 658-834 (FHMHINLELL…ETIVMHRSEP (177 aa)) form the PCI domain. The tract at residues 865 to 955 (NFFQRGGNQG…RNVEYQNKAE (91 aa)) is disordered. Positions 882 to 894 (YRNQNQNQNWNNN) are enriched in low complexity. Residues 911–955 (GEGREQREHHRDHHRDQREHREHQNREFREQREQMRNVEYQNKAE) show a composition bias toward basic and acidic residues.

It belongs to the eIF-3 subunit C family. As to quaternary structure, component of the eukaryotic translation initiation factor 3 (eIF-3) complex.

It localises to the cytoplasm. Its function is as follows. Component of the eukaryotic translation initiation factor 3 (eIF-3) complex, which is involved in protein synthesis of a specialized repertoire of mRNAs and, together with other initiation factors, stimulates binding of mRNA and methionyl-tRNAi to the 40S ribosome. The eIF-3 complex specifically targets and initiates translation of a subset of mRNAs involved in cell proliferation. This is Eukaryotic translation initiation factor 3 subunit C from Anopheles gambiae (African malaria mosquito).